Here is a 658-residue protein sequence, read N- to C-terminus: Threonine--tRNA ligase (658 aa).

In terms of domain architecture, TGS spans 1–64; it reads MSFSISLSFP…EQSGQVEIIT (64 aa). The segment at 246–549 is catalytic; that stretch reads DHRRLGREMD…LIENFAGHMP (304 aa). Positions 343, 394, and 526 each coordinate Zn(2+).

This sequence belongs to the class-II aminoacyl-tRNA synthetase family. As to quaternary structure, homodimer. The cofactor is Zn(2+).

It localises to the cytoplasm. It carries out the reaction tRNA(Thr) + L-threonine + ATP = L-threonyl-tRNA(Thr) + AMP + diphosphate + H(+). Catalyzes the attachment of threonine to tRNA(Thr) in a two-step reaction: L-threonine is first activated by ATP to form Thr-AMP and then transferred to the acceptor end of tRNA(Thr). Also edits incorrectly charged L-seryl-tRNA(Thr). This chain is Threonine--tRNA ligase, found in Bartonella bacilliformis (strain ATCC 35685 / KC583 / Herrer 020/F12,63).